The chain runs to 120 residues: NADH dehydrogenase [ubiquinone] 1 subunit C2 (120 aa).

Met-1 carries the post-translational modification N-acetylmethionine. The helical transmembrane segment at 57–76 threads the bilayer; sequence GLHRQLLYITSFVFVGYYLL.

It belongs to the complex I NDUFC2 subunit family. As to quaternary structure, complex I is composed of 45 different subunits. Interacts with TMEM242. There is a minor unacetylated form of subunit B14.5b.

It is found in the mitochondrion inner membrane. Accessory subunit of the mitochondrial membrane respiratory chain NADH dehydrogenase (Complex I), that is believed not to be involved in catalysis but required for the complex assembly. Complex I functions in the transfer of electrons from NADH to the respiratory chain. The immediate electron acceptor for the enzyme is believed to be ubiquinone. The chain is NADH dehydrogenase [ubiquinone] 1 subunit C2 from Bos taurus (Bovine).